The primary structure comprises 235 residues: Auracyanin-B (235 aa).

Over residues 1–21 (MSWRGSGRSNFRSRSSSNGGS) the composition is skewed to low complexity. 2 disordered regions span residues 1–27 (MSWRGSGRSNFRSRSSSNGGSTFSGGS) and 64–107 (ATPR…NVVN). Positions 1 to 56 (MSWRGSGRSNFRSRSSSNGGSTFSGGSAGGPPLIVMMGLAFGAGLIMLIVMIASNA) are cleaved as a signal peptide. A propeptide spanning residues 57–80 (TAGGFVAATPRPTATPRPTAAPAP) is cleaved from the precursor. Residues 69–86 (TATPRPTAAPAPTQPPAA) show a composition bias toward pro residues. Residues 87 to 100 (QPTTAPATQAANAP) are compositionally biased toward low complexity. The Plastocyanin-like domain occupies 111 to 235 (AQTVEVRAAP…GMKGTLTVTP (125 aa)). Cu cation contacts are provided by H152, C217, H222, and M227.

This sequence belongs to the multicopper oxidase family. Cu cation is required as a cofactor. Post-translationally, glycosylated.

The protein resides in the cell membrane. In terms of biological role, probably a soluble electron acceptor for the integral membrane protein electron transfer alternative complex III (ACIII). This Chloroflexus aurantiacus (strain ATCC 29366 / DSM 635 / J-10-fl) protein is Auracyanin-B.